We begin with the raw amino-acid sequence, 281 residues long: MNIADGRQAFPAPAKLNLDLRITGRREDGYHNIESIFCLIDLQDTVYLKPRDDGKIILHNPVGGIPQEADLSYRAASLLQKYARNLAGVEIWLDKKIPTGAGLGGGSSDAATVLLVLNRWWQCGLTQWQLIDLGAALGADVPFFIFGKNAFASGIGEKLIGMDIPKQWYVIVKPPVHVSTAKIFTYEGLTRDSASSIMPTFQNLQPFRNDMQAVVFKEYPEVWKAYSELSKYGSAMMTGSGACIFAAFQARNSAYNIYRQVSGLYEAYLAEGLSKHPLLSV.

The active site involves Lys-15. Pro-98–Ser-108 contributes to the ATP binding site. Residue Asp-140 is part of the active site.

The protein belongs to the GHMP kinase family. IspE subfamily.

It catalyses the reaction 4-CDP-2-C-methyl-D-erythritol + ATP = 4-CDP-2-C-methyl-D-erythritol 2-phosphate + ADP + H(+). It participates in isoprenoid biosynthesis; isopentenyl diphosphate biosynthesis via DXP pathway; isopentenyl diphosphate from 1-deoxy-D-xylulose 5-phosphate: step 3/6. Functionally, catalyzes the phosphorylation of the position 2 hydroxy group of 4-diphosphocytidyl-2C-methyl-D-erythritol. This chain is 4-diphosphocytidyl-2-C-methyl-D-erythritol kinase, found in Neisseria gonorrhoeae (strain NCCP11945).